A 268-amino-acid chain; its full sequence is Tryptophan synthase alpha chain (268 aa).

Catalysis depends on proton acceptor residues Glu-49 and Asp-60.

This sequence belongs to the TrpA family. Tetramer of two alpha and two beta chains.

The catalysed reaction is (1S,2R)-1-C-(indol-3-yl)glycerol 3-phosphate + L-serine = D-glyceraldehyde 3-phosphate + L-tryptophan + H2O. It functions in the pathway amino-acid biosynthesis; L-tryptophan biosynthesis; L-tryptophan from chorismate: step 5/5. The alpha subunit is responsible for the aldol cleavage of indoleglycerol phosphate to indole and glyceraldehyde 3-phosphate. The polypeptide is Tryptophan synthase alpha chain (Pectobacterium atrosepticum (strain SCRI 1043 / ATCC BAA-672) (Erwinia carotovora subsp. atroseptica)).